An 858-amino-acid polypeptide reads, in one-letter code: Leucine--tRNA ligase (858 aa).

Positions 42 to 52 (PYPSGRLHMGH) match the 'HIGH' region motif. The short motif at 618-622 (KMSKS) is the 'KMSKS' region element. An ATP-binding site is contributed by lysine 621.

This sequence belongs to the class-I aminoacyl-tRNA synthetase family.

It localises to the cytoplasm. It carries out the reaction tRNA(Leu) + L-leucine + ATP = L-leucyl-tRNA(Leu) + AMP + diphosphate. This Vibrio cholerae serotype O1 (strain ATCC 39315 / El Tor Inaba N16961) protein is Leucine--tRNA ligase.